The chain runs to 341 residues: MLVLGLETSCDETGVALYDSERGLLADALFSQIDLHRVFGGVVPELASRDHVKRMLPLIRQVLDEAGCVATEIDAIAYTAGPGLVGALLVGASCAQALAFAWDIPAIGVHHMEGHLLAPMLEENPPAFPFVALLVSGGHTQLVRVDGIGQYELLGESLDDAAGEAFDKTAKLIGLNYPGGPEIARLAEQGVAGRFVFPRPMTDRPGLEFSFSGLKTFALNTWQQCKNAGDDSEQTRCDLSLAFQQAVVETLTIKCKRALKQTGLKRLVIAGGVSANKALRASLEDMLGSIKGNVYYARPQFCTDNGAMIAYAGCQRLLAGQQQDLAISVQARWPMEQLPPL.

Residues H111 and H115 each coordinate Fe cation. Substrate contacts are provided by residues 134–138 (LVSGG), D167, G180, and N276. D304 contacts Fe cation.

It belongs to the KAE1 / TsaD family. It depends on Fe(2+) as a cofactor.

It is found in the cytoplasm. The enzyme catalyses L-threonylcarbamoyladenylate + adenosine(37) in tRNA = N(6)-L-threonylcarbamoyladenosine(37) in tRNA + AMP + H(+). Its function is as follows. Required for the formation of a threonylcarbamoyl group on adenosine at position 37 (t(6)A37) in tRNAs that read codons beginning with adenine. Is involved in the transfer of the threonylcarbamoyl moiety of threonylcarbamoyl-AMP (TC-AMP) to the N6 group of A37, together with TsaE and TsaB. TsaD likely plays a direct catalytic role in this reaction. The chain is tRNA N6-adenosine threonylcarbamoyltransferase from Pseudomonas putida (strain ATCC 700007 / DSM 6899 / JCM 31910 / BCRC 17059 / LMG 24140 / F1).